The chain runs to 1411 residues: DNA-directed RNA polymerase subunit beta' (1411 aa).

Residues Cys69, Cys71, Cys84, and Cys87 each contribute to the Zn(2+) site. The Mg(2+) site is built by Asp461, Asp463, and Asp465. Zn(2+) contacts are provided by Cys809, Cys883, Cys890, and Cys893.

The protein belongs to the RNA polymerase beta' chain family. In terms of assembly, the RNAP catalytic core consists of 2 alpha, 1 beta, 1 beta' and 1 omega subunit. When a sigma factor is associated with the core the holoenzyme is formed, which can initiate transcription. Mg(2+) serves as cofactor. Zn(2+) is required as a cofactor.

It carries out the reaction RNA(n) + a ribonucleoside 5'-triphosphate = RNA(n+1) + diphosphate. Its function is as follows. DNA-dependent RNA polymerase catalyzes the transcription of DNA into RNA using the four ribonucleoside triphosphates as substrates. This chain is DNA-directed RNA polymerase subunit beta', found in Ehrlichia ruminantium (strain Welgevonden).